The following is a 407-amino-acid chain: Multifunctional CCA protein (407 aa).

2 residues coordinate ATP: G8 and R11. The CTP site is built by G8 and R11. Positions 21 and 23 each coordinate Mg(2+). Positions 91, 137, and 140 each coordinate ATP. CTP contacts are provided by R91, R137, and R140. An HD domain is found at 226–327 (TGIHVMAVVD…VKLLERTDAL (102 aa)).

This sequence belongs to the tRNA nucleotidyltransferase/poly(A) polymerase family. Bacterial CCA-adding enzyme type 1 subfamily. Monomer. Can also form homodimers and oligomers. It depends on Mg(2+) as a cofactor. Ni(2+) is required as a cofactor.

The enzyme catalyses a tRNA precursor + 2 CTP + ATP = a tRNA with a 3' CCA end + 3 diphosphate. The catalysed reaction is a tRNA with a 3' CCA end + 2 CTP + ATP = a tRNA with a 3' CCACCA end + 3 diphosphate. Functionally, catalyzes the addition and repair of the essential 3'-terminal CCA sequence in tRNAs without using a nucleic acid template. Adds these three nucleotides in the order of C, C, and A to the tRNA nucleotide-73, using CTP and ATP as substrates and producing inorganic pyrophosphate. tRNA 3'-terminal CCA addition is required both for tRNA processing and repair. Also involved in tRNA surveillance by mediating tandem CCA addition to generate a CCACCA at the 3' terminus of unstable tRNAs. While stable tRNAs receive only 3'-terminal CCA, unstable tRNAs are marked with CCACCA and rapidly degraded. In Aromatoleum aromaticum (strain DSM 19018 / LMG 30748 / EbN1) (Azoarcus sp. (strain EbN1)), this protein is Multifunctional CCA protein.